Consider the following 427-residue polypeptide: Inorganic pyrophosphatase 1 (427 aa).

Over residues 36-52 (SSSSNTATTSTSSSNTS) the composition is skewed to low complexity. 2 disordered regions span residues 36–63 (SSSS…TSRP) and 77–118 (SMDS…RSLH). Polar residues-rich tracts occupy residues 53–63 (QKWATSRTSRP) and 77–114 (SMDS…ANSE). Positions 259, 264, and 296 each coordinate Mg(2+).

The protein belongs to the PPase family. Requires Mg(2+) as cofactor. As to expression, expressed in coelomocytes, the intestine and in the nervous system including the nerve cords and sensory neurons.

The protein localises to the cytoplasm. The enzyme catalyses diphosphate + H2O = 2 phosphate + H(+). In terms of biological role, catalyzes the hydrolysis of inorganic pyrophosphate (PPi) forming two phosphate ions. Plays a role in intestinal development and subsequent normal secretory, digestive and absorption functions. Required for larval development. In Caenorhabditis elegans, this protein is Inorganic pyrophosphatase 1.